The primary structure comprises 1513 residues: DNA polymerase alpha catalytic subunit (1513 aa).

The segment at 235-254 is disordered; the sequence is STNQNANASDSKRVSNQTND. Residues Cys-1344, Cys-1347, Cys-1370, Cys-1373, Cys-1404, Cys-1409, Cys-1422, and Cys-1427 each contribute to the Zn(2+) site. A CysA-type zinc finger spans residues 1344–1373; the sequence is CPHCSESYHFPGIFQDGKNNTLSGLLCIKC. Positions 1404-1427 match the CysB motif motif; the sequence is CQEPACGAVSRQLLYNNKCINLAC.

This sequence belongs to the DNA polymerase type-B family.

Its subcellular location is the nucleus. It catalyses the reaction DNA(n) + a 2'-deoxyribonucleoside 5'-triphosphate = DNA(n+1) + diphosphate. Polymerase alpha in a complex with DNA primase is a replicative polymerase. This Oxytricha trifallax (Sterkiella histriomuscorum) protein is DNA polymerase alpha catalytic subunit.